Consider the following 424-residue polypeptide: Light-independent protochlorophyllide reductase subunit N (424 aa).

3 residues coordinate [4Fe-4S] cluster: cysteine 27, cysteine 52, and cysteine 113.

This sequence belongs to the BchN/ChlN family. As to quaternary structure, protochlorophyllide reductase is composed of three subunits; BchL, BchN and BchB. Forms a heterotetramer of two BchB and two BchN subunits. Requires [4Fe-4S] cluster as cofactor.

The catalysed reaction is chlorophyllide a + oxidized 2[4Fe-4S]-[ferredoxin] + 2 ADP + 2 phosphate = protochlorophyllide a + reduced 2[4Fe-4S]-[ferredoxin] + 2 ATP + 2 H2O. It participates in porphyrin-containing compound metabolism; bacteriochlorophyll biosynthesis (light-independent). Functionally, component of the dark-operative protochlorophyllide reductase (DPOR) that uses Mg-ATP and reduced ferredoxin to reduce ring D of protochlorophyllide (Pchlide) to form chlorophyllide a (Chlide). This reaction is light-independent. The NB-protein (BchN-BchB) is the catalytic component of the complex. The chain is Light-independent protochlorophyllide reductase subunit N from Halorhodospira halophila (strain DSM 244 / SL1) (Ectothiorhodospira halophila (strain DSM 244 / SL1)).